We begin with the raw amino-acid sequence, 93 residues long: Small ribosomal subunit protein uS19c (93 aa).

It belongs to the universal ribosomal protein uS19 family.

It localises to the plastid. The protein resides in the chloroplast. Its function is as follows. Protein S19 forms a complex with S13 that binds strongly to the 16S ribosomal RNA. In Brachypodium distachyon (Purple false brome), this protein is Small ribosomal subunit protein uS19c.